The chain runs to 743 residues: Glycerol-3-phosphate O-acyltransferase 2 (743 aa).

The Lumenal portion of the chain corresponds to 1 to 34 (MSAPAADHNAAKPIPHVPQASRRYKNSYNGFVYN). Residues 35-55 (IHTWLYDVSVFLFNILFTIFF) traverse the membrane as a helical segment. Residues 56–442 (REIKVRGAYN…TKLEALRCFV (387 aa)) lie on the Cytoplasmic side of the membrane. The helical transmembrane segment at 443–457 (TLIVRLIKFSVFAIL) threads the bilayer. Position 458 (Ser-458) is a topological domain, lumenal. The chain crosses the membrane as a helical span at residues 459-473 (LPGSILFTPIFIICR). Residues 474–501 (VYSEKKAKEGLKKSLVKIKGTDLLATWK) lie on the Cytoplasmic side of the membrane. A helical membrane pass occupies residues 502 to 522 (LIVALILAPILYVTYSILLII). At 523–531 (LARKQHYCR) the chain is on the lumenal side. The helical transmembrane segment at 532 to 552 (IWVPSNNAFIQFVYFYALLVF) threads the bilayer. The Cytoplasmic portion of the chain corresponds to 553 to 743 (TTYSSLKTGE…RQKREHEKKE (191 aa)). Residues Ser-632, Ser-637, Ser-647, Ser-651, Ser-654, Ser-657, Ser-664, Ser-668, and Ser-671 each carry the phosphoserine modification. Thr-673 bears the Phosphothreonine mark. Residues 682–743 (KQGQWKSEGE…RQKREHEKKE (62 aa)) form a disordered region. Ser-688 bears the Phosphoserine mark. Residues 691–700 (ETSEDEDEFD) are compositionally biased toward acidic residues. The residue at position 692 (Thr-692) is a Phosphothreonine. Residue Ser-693 is modified to Phosphoserine.

Belongs to the GPAT/DAPAT family. Phosphorylated at a conserved motif involving Ser-664, Ser-668 and Ser-671. This phosphorylation plays a critical role for efficient TAG mobilization. Phosphorylation deficiency at this motif increases the enzyme activity and consequently induces de novo formation of phosphatidic acid.

It is found in the lipid droplet. Its subcellular location is the endoplasmic reticulum membrane. It catalyses the reaction sn-glycerol 3-phosphate + an acyl-CoA = a 1-acyl-sn-glycero-3-phosphate + CoA. The enzyme catalyses dihydroxyacetone phosphate + an acyl-CoA = a 1-acylglycerone 3-phosphate + CoA. The catalysed reaction is sn-glycerol 3-phosphate + hexadecanoyl-CoA = 1-hexadecanoyl-sn-glycero-3-phosphate + CoA. It carries out the reaction (9Z)-hexadecenoyl-CoA + sn-glycerol 3-phosphate = 1-(9Z-hexadecenoyl)-sn-glycero-3-phosphate + CoA. It catalyses the reaction sn-glycerol 3-phosphate + octadecanoyl-CoA = 1-octadecanoyl-sn-glycero-3-phosphate + CoA. The enzyme catalyses sn-glycerol 3-phosphate + (9Z)-octadecenoyl-CoA = 1-(9Z-octadecenoyl)-sn-glycero-3-phosphate + CoA. It functions in the pathway phospholipid metabolism; CDP-diacylglycerol biosynthesis; CDP-diacylglycerol from sn-glycerol 3-phosphate: step 1/3. In terms of biological role, dual substrate-specific glycerol-3-phosphate/dihydroxyacetone phosphate sn-1 acyltransferase, catalyzing the first and committed reaction in the de novo synthesis of glycerophospholipids and triacylglycerols (TAGs). Can use both Gly-3-P and dihydroxyacetone phosphate with similar efficiencies and has a broad fatty acyl-CoA specificity profile. Transfers a fatty acid from fatty acyl-CoA to the sn-1 position of glycerol-3-phosphate to produce lysophosphatidic acid (LysoPA). These lipids not only are precursors of glycerolipids, but also are dynamic components of signal transduction systems that control cell physiology. This chain is Glycerol-3-phosphate O-acyltransferase 2 (GPT2), found in Saccharomyces cerevisiae (strain ATCC 204508 / S288c) (Baker's yeast).